Here is a 726-residue protein sequence, read N- to C-terminus: MDSSAKTLTEDKQVYRVEGFSCANCAGKFEKNVKQLAGVQDAKVNFGASKIDVYGNASVQELEKAGAFENLKVFPEKLANSSMQAVKEDTKAPKEEKIPFYKKHSTLLFATLLIAFGYLSHFVNGEDNLVTSMLFVGSIVIGGYSLFKVGFQNLIRFDFDMKTLMTVAVIGAAIIGEWAEASIVVVLFAISEALERFSMDRARQSIRSLMDIAPKEALVMRNGQEIMIHVDDIAVGDIMIVKPGEKIAMDGIIINGVSAVNQAAITGESVPVAKTVDDEVFAGTLNEEGLLEVKITKYVEDTTISKIIHLVEEAQGERAPAQAFVDKFAKYYTPIIMVIAALVAVVPPLFFGGSWDTWVYQGLAVLVVGCPCALVISTPISIVSAIGNAAKKGVLIKGGVYLEELGAIKAIAFDKTGTLTKGVPVVTDFKVLNDQVEEKELFSIITALEYRSQHPLASAIMKKAEQDNITYSDVRVEDFTSITGRGIQGNIDGTTYYIGSPRLFKELNVSDFSLEFENKVKVLQNQGKTAMIIGTDQTILGVIAVADEVRETSKNVIQKLHQLGIKQTIMLTGDNQGTAEAIGAHVGVSDIQSELMPQDKLDYIKKMKAEHGNVAMIGDGVNDAPALAASTVGIAMGGAGTDTAIETADIALMGDDLSKLPFAVRLSRKTLNIIKANITFAIGIKIIALLLVIPGWLTLWIAILSDMGATILVALNSLRLMRVKDK.

In terms of domain architecture, HMA spans 11 to 74; the sequence is DKQVYRVEGF…AGAFENLKVF (64 aa). Cd(2+) is bound by residues cysteine 22 and cysteine 25. The next 5 membrane-spanning stretches (helical) occupy residues 105–125, 129–149, 163–179, 335–355, and 363–383; these read STLLFATLLIAFGYLSHFVNG, LVTSMLFVGSIVIGGYSLFKV, TLMTVAVIGAAIIGEWA, IIMVIAALVAVVPPLFFGGSW, and LAVLVVGCPCALVISTPISIV. The active-site 4-aspartylphosphate intermediate is the aspartate 414. Helical transmembrane passes span 671–693 and 698–720; these read LNIIKANITFAIGIKIIALLLVI and TLWIAILSDMGATILVALNSLRL.

It belongs to the cation transport ATPase (P-type) (TC 3.A.3) family. Type IB subfamily.

It is found in the cell membrane. It carries out the reaction Cd(2+)(in) + ATP + H2O = Cd(2+)(out) + ADP + phosphate + H(+). Couples the hydrolysis of ATP with the export of cadmium. This chain is Probable cadmium-transporting ATPase (cadA), found in Staphylococcus aureus (strain MRSA252).